A 181-amino-acid chain; its full sequence is 6,7-dimethyl-8-ribityllumazine synthase (181 aa).

Residues Tyr-27, Ala-58–Glu-60, and Cys-87–Ile-89 contribute to the 5-amino-6-(D-ribitylamino)uracil site. Glu-92–Thr-93 contributes to the (2S)-2-hydroxy-3-oxobutyl phosphate binding site. His-95 acts as the Proton donor in catalysis. Asn-120 serves as a coordination point for 5-amino-6-(D-ribitylamino)uracil. Residue Arg-134 participates in (2S)-2-hydroxy-3-oxobutyl phosphate binding.

The protein belongs to the DMRL synthase family.

It catalyses the reaction (2S)-2-hydroxy-3-oxobutyl phosphate + 5-amino-6-(D-ribitylamino)uracil = 6,7-dimethyl-8-(1-D-ribityl)lumazine + phosphate + 2 H2O + H(+). Its pathway is cofactor biosynthesis; riboflavin biosynthesis; riboflavin from 2-hydroxy-3-oxobutyl phosphate and 5-amino-6-(D-ribitylamino)uracil: step 1/2. In terms of biological role, catalyzes the formation of 6,7-dimethyl-8-ribityllumazine by condensation of 5-amino-6-(D-ribitylamino)uracil with 3,4-dihydroxy-2-butanone 4-phosphate. This is the penultimate step in the biosynthesis of riboflavin. In Methylobacterium sp. (strain 4-46), this protein is 6,7-dimethyl-8-ribityllumazine synthase.